Consider the following 151-residue polypeptide: D-aminoacyl-tRNA deacylase (151 aa).

Positions 139-140 (GP) match the Gly-cisPro motif, important for rejection of L-amino acids motif.

This sequence belongs to the DTD family. In terms of assembly, homodimer.

It is found in the cytoplasm. It catalyses the reaction glycyl-tRNA(Ala) + H2O = tRNA(Ala) + glycine + H(+). It carries out the reaction a D-aminoacyl-tRNA + H2O = a tRNA + a D-alpha-amino acid + H(+). Its function is as follows. An aminoacyl-tRNA editing enzyme that deacylates mischarged D-aminoacyl-tRNAs. Also deacylates mischarged glycyl-tRNA(Ala), protecting cells against glycine mischarging by AlaRS. Acts via tRNA-based rather than protein-based catalysis; rejects L-amino acids rather than detecting D-amino acids in the active site. By recycling D-aminoacyl-tRNA to D-amino acids and free tRNA molecules, this enzyme counteracts the toxicity associated with the formation of D-aminoacyl-tRNA entities in vivo and helps enforce protein L-homochirality. The chain is D-aminoacyl-tRNA deacylase from Symbiobacterium thermophilum (strain DSM 24528 / JCM 14929 / IAM 14863 / T).